The chain runs to 303 residues: HTH-type transcriptional regulator YjiE (303 aa).

The HTH lysR-type domain occupies 11–68; it reads IETKWLYDFLTLEKCRNFSQAAVSRNVSQPAFSRRIRALEQAIGVELFNRQVTPLQLS. The segment at residues 28–47 is a DNA-binding region (H-T-H motif); sequence FSQAAVSRNVSQPAFSRRIR.

It belongs to the LysR transcriptional regulatory family. As to quaternary structure, forms dimers, tetramers and possibly dodecameric complexes; oligomerization may be governed by cellular concentrations. DNA-binding seems to decrease oligomerization.

In terms of biological role, protects cells from HOCl (hypochlorite) stress but not peroxide or diamide stress. Decreases the intracellular load of reactive oxygen species by up-regulating genes involved in methionine and cysteine biosynthesis and down-regulating Fur-regulated genes involved in iron acquisition. Has also been suggested to down-regulate expression of the flagellar regulon, decreasing motility, but this activity was not confirmed in a second study. In Escherichia coli (strain K12), this protein is HTH-type transcriptional regulator YjiE (yjiE).